We begin with the raw amino-acid sequence, 112 residues long: MSEQYSNDFKLNAAMAAIVLSGGVIGYAKSKSMPSLIAGSVFGLLYSTSAYYLSQGNSKVGLGVSVLASSLLGGVMGKKAIATSKPIPIILATGSAFTLLSSGKELYNIHKN.

4 consecutive transmembrane segments (helical) span residues Phe-9 to Gly-26, Leu-36 to Leu-53, Val-60 to Gly-77, and Ile-87 to Ile-109.

It belongs to the TMEM14 family.

It is found in the membrane. This Dictyostelium discoideum (Social amoeba) protein is Transmembrane protein 14 homolog.